The primary structure comprises 233 residues: Leucyl/phenylalanyl-tRNA--protein transferase (233 aa).

It belongs to the L/F-transferase family.

The protein localises to the cytoplasm. It carries out the reaction N-terminal L-lysyl-[protein] + L-leucyl-tRNA(Leu) = N-terminal L-leucyl-L-lysyl-[protein] + tRNA(Leu) + H(+). The catalysed reaction is N-terminal L-arginyl-[protein] + L-leucyl-tRNA(Leu) = N-terminal L-leucyl-L-arginyl-[protein] + tRNA(Leu) + H(+). It catalyses the reaction L-phenylalanyl-tRNA(Phe) + an N-terminal L-alpha-aminoacyl-[protein] = an N-terminal L-phenylalanyl-L-alpha-aminoacyl-[protein] + tRNA(Phe). Functionally, functions in the N-end rule pathway of protein degradation where it conjugates Leu, Phe and, less efficiently, Met from aminoacyl-tRNAs to the N-termini of proteins containing an N-terminal arginine or lysine. In Shewanella denitrificans (strain OS217 / ATCC BAA-1090 / DSM 15013), this protein is Leucyl/phenylalanyl-tRNA--protein transferase.